We begin with the raw amino-acid sequence, 426 residues long: Elongation factor Tu, mitochondrial (426 aa).

The transit peptide at 1 to 27 (MFKNLAGSFRAVSRVAFKTRPSLVRSY) directs the protein to the mitochondrion. The region spanning 34-230 (KPHVNIGTIG…AVDEHIPTPT (197 aa)) is the tr-type G domain. The segment at 43–50 (GHVDHGKT) is G1. 43 to 50 (GHVDHGKT) serves as a coordination point for GTP. The interval 84–88 (GITIS) is G2. Residues 105 to 108 (DCPG) form a G3 region. Residues 105–109 (DCPGH) and 160–163 (NKVD) contribute to the GTP site. The tract at residues 160 to 163 (NKVD) is G4. The interval 198–200 (SAL) is G5.

Belongs to the TRAFAC class translation factor GTPase superfamily. Classic translation factor GTPase family. EF-Tu/EF-1A subfamily.

It localises to the mitochondrion. It participates in protein biosynthesis; polypeptide chain elongation. In terms of biological role, G-protein that, in its active GTP-bound form, binds to and delivers aminoacyl-tRNA to the A-site of ribosomes during protein biosynthesis. In the presence of a correct codon-anticodon match between the aminoacyl-tRNA and the A-site codon of the ribosome-bound mRNA, the ribosome acts as a GTPase activator and the GTP is hydrolyzed. The inactive GDP-bound form leaves the ribosome and must be recycled before binding another molecule of aminoacyl-tRNA. Required for mitochondrial protein biosynthesis and maintenance of mitochondrial DNA. In Meyerozyma guilliermondii (strain ATCC 6260 / CBS 566 / DSM 6381 / JCM 1539 / NBRC 10279 / NRRL Y-324) (Yeast), this protein is Elongation factor Tu, mitochondrial (TUF1).